A 63-amino-acid chain; its full sequence is MEWELNLLLYLALFFFLLFLLFLLLFVVIKQLKNSVANTAGALQPGRLSVHREPWGFSREQAV.

Important for interaction with SLC2A1 and SLC2A3 stretches follow at residues 7–29 (LLLYLALFFFLLFLLFLLLFVVI) and 51–57 (HREPWGF). The helical transmembrane segment at 9 to 29 (LYLALFFFLLFLLFLLLFVVI) threads the bilayer.

Interacts with glucose transporters SLC2A1/GLUT1 and SLC2A3/GLUT3; the interactions may promote SLC2A1- and SLC2A3-mediated glucose transport to meet the energy needs of mesendoderm differentiation.

It is found in the cell membrane. Functionally, required for mesendoderm differentiation. Interacts with glucose transporters and promotes glucose uptake. Probably augments the glucose uptake capacity of glucose transporter proteins to meet the energy needs of mesendoderm differentiation. The polypeptide is Small integral membrane protein 43 (Homo sapiens (Human)).